The sequence spans 551 residues: Adenine deaminase (551 aa).

Belongs to the metallo-dependent hydrolases superfamily. Adenine deaminase family. The cofactor is Mn(2+).

It catalyses the reaction adenine + H2O + H(+) = hypoxanthine + NH4(+). The protein is Adenine deaminase of Leuconostoc citreum (strain KM20).